Reading from the N-terminus, the 124-residue chain is UPF0342 protein DSY2926 (124 aa).

It belongs to the UPF0342 family.

The polypeptide is UPF0342 protein DSY2926 (Desulfitobacterium hafniense (strain Y51)).